A 402-amino-acid polypeptide reads, in one-letter code: Serine/threonine-protein kinase US3 homolog (402 aa).

2 disordered regions span residues 1-21 (MSST…KVHD) and 46-88 (FPDS…SPET). Positions 102-386 (YNIVSSLPPG…AQDILMLPLF (285 aa)) constitute a Protein kinase domain. ATP contacts are provided by residues 110–118 (PGSEGYIYV) and K127. The active-site Proton acceptor is D218.

The protein belongs to the protein kinase superfamily. Ser/Thr protein kinase family. In terms of processing, phosphorylated by UL13 homolog; this phosphorylation regulates subsequent phosphorylation of UL31 and UL34 homologs by US3. Autophosphorylated.

The protein resides in the host cytoplasm. It is found in the host nucleus. The catalysed reaction is L-seryl-[protein] + ATP = O-phospho-L-seryl-[protein] + ADP + H(+). It carries out the reaction L-threonyl-[protein] + ATP = O-phospho-L-threonyl-[protein] + ADP + H(+). In terms of biological role, multifunctional serine/threonine kinase that plays a role in several processes including egress of virus particles from the nucleus, modulation of the actin cytoskeleton and inhibition of apoptosis. Phosphorylates UL31 and UL34 homologs, two critical regulators of capsid budding from nucleus to endoplasmic reticulum, thereby facilitating virion egress. Modulates and redistributes host components of the nuclear envelope, including LMNA, emerin/EMD and the nuclear matrix protein MATR3. Phosphorylates envelope glycoprotein B (gB), probably to direct it to the cell surface. Promotes virus intracellular spread by restructuring host cell cytoskeleton. Blocks host apoptosis to extend cell survival and allow efficient viral replication. Promotes viral gene expression by phosphorylating host HDAC2 to reduce viral genome silencing. This Gallid herpesvirus 2 (strain GA) (GaHV-2) protein is Serine/threonine-protein kinase US3 homolog (US1206).